A 316-amino-acid chain; its full sequence is ATP synthase gamma chain (316 aa).

This sequence belongs to the ATPase gamma chain family. In terms of assembly, F-type ATPases have 2 components, CF(1) - the catalytic core - and CF(0) - the membrane proton channel. CF(1) has five subunits: alpha(3), beta(3), gamma(1), delta(1), epsilon(1). CF(0) has three main subunits: a, b and c.

It localises to the cellular thylakoid membrane. Produces ATP from ADP in the presence of a proton gradient across the membrane. The gamma chain is believed to be important in regulating ATPase activity and the flow of protons through the CF(0) complex. The polypeptide is ATP synthase gamma chain (Prochlorococcus marinus (strain NATL2A)).